A 101-amino-acid chain; its full sequence is Urease subunit gamma (101 aa).

The protein belongs to the urease gamma subunit family. In terms of assembly, heterotrimer of UreA (gamma), UreB (beta) and UreC (alpha) subunits. Three heterotrimers associate to form the active enzyme.

The protein resides in the cytoplasm. It catalyses the reaction urea + 2 H2O + H(+) = hydrogencarbonate + 2 NH4(+). Its pathway is nitrogen metabolism; urea degradation; CO(2) and NH(3) from urea (urease route): step 1/1. This Ureaplasma urealyticum (Ureaplasma urealyticum biotype 2) protein is Urease subunit gamma.